A 237-amino-acid polypeptide reads, in one-letter code: Probable F-box protein At1g53815 (237 aa).

The 32-residue stretch at 41 to 72 folds into the F-box domain; sequence ISNILSRLPLKSKAKCRCVSKLWSSIIRRPNY.

The protein is Probable F-box protein At1g53815 of Arabidopsis thaliana (Mouse-ear cress).